A 231-amino-acid polypeptide reads, in one-letter code: ATP-dependent dethiobiotin synthetase BioD 2 (231 aa).

ATP is bound at residue 13 to 18; the sequence is SVGKTV. Mg(2+) is bound at residue threonine 17. Lysine 38 is an active-site residue. Residues aspartate 55, 112 to 115, 172 to 173, 201 to 203, and glutamine 208 each bind ATP; these read EGTG, NR, and PYL. 2 residues coordinate Mg(2+): aspartate 55 and glutamate 112.

It belongs to the dethiobiotin synthetase family. In terms of assembly, homodimer. The cofactor is Mg(2+).

Its subcellular location is the cytoplasm. It carries out the reaction (7R,8S)-7,8-diammoniononanoate + CO2 + ATP = (4R,5S)-dethiobiotin + ADP + phosphate + 3 H(+). It participates in cofactor biosynthesis; biotin biosynthesis; biotin from 7,8-diaminononanoate: step 1/2. Its function is as follows. Catalyzes a mechanistically unusual reaction, the ATP-dependent insertion of CO2 between the N7 and N8 nitrogen atoms of 7,8-diaminopelargonic acid (DAPA, also called 7,8-diammoniononanoate) to form a ureido ring. This Escherichia coli O157:H7 protein is ATP-dependent dethiobiotin synthetase BioD 2.